The primary structure comprises 205 residues: Putative protein phosphatase inhibitor 2-like protein 1 (205 aa).

Disordered regions lie at residues 1–44 (MAAS…SKKS), 64–92 (GLMK…TETT), 107–148 (AEGL…TLHY), and 171–205 (VEEM…SRSS). 2 required for binding PPP1CC regions span residues 12-17 (KGILKD) and 43-55 (KSQK…ILAT). Polar residues predominate over residues 17–26 (DNTSTTSSMV). The span at 30–44 (EHPRGSVHEQLSKKS) shows a compositional bias: basic and acidic residues. Thr-73 carries the post-translational modification Phosphothreonine; by GSK3. 2 stretches are compositionally biased toward acidic residues: residues 80 to 91 (GDDEDACSDTET) and 121 to 130 (SSGEEDSDLS). Ser-87 is modified (phosphoserine; by CK2). Residues 131 to 144 (PEEREKKRQFEMRR) show a composition bias toward basic and acidic residues. Residues 147–150 (HYNE) form a required for binding PPP1CC catalytic center, displacing metal ions and inhibition of PPP1CC catalytic activity region. A compositionally biased stretch (polar residues) spans 182–205 (SMNTEESNQGSTASDQQQNKSRSS).

This sequence belongs to the protein phosphatase inhibitor 2 family.

Its function is as follows. Inhibitor of protein-phosphatase 1. The chain is Putative protein phosphatase inhibitor 2-like protein 1 (PPP1R2P1) from Homo sapiens (Human).